The following is a 237-amino-acid chain: 1-(5-phosphoribosyl)-5-[(5-phosphoribosylamino)methylideneamino] imidazole-4-carboxamide isomerase (237 aa).

The Proton acceptor role is filled by Asp-8. Asp-129 acts as the Proton donor in catalysis.

Belongs to the HisA/HisF family.

The protein resides in the cytoplasm. The catalysed reaction is 1-(5-phospho-beta-D-ribosyl)-5-[(5-phospho-beta-D-ribosylamino)methylideneamino]imidazole-4-carboxamide = 5-[(5-phospho-1-deoxy-D-ribulos-1-ylimino)methylamino]-1-(5-phospho-beta-D-ribosyl)imidazole-4-carboxamide. It participates in amino-acid biosynthesis; L-histidine biosynthesis; L-histidine from 5-phospho-alpha-D-ribose 1-diphosphate: step 4/9. The protein is 1-(5-phosphoribosyl)-5-[(5-phosphoribosylamino)methylideneamino] imidazole-4-carboxamide isomerase of Dehalococcoides mccartyi (strain ATCC BAA-2266 / KCTC 15142 / 195) (Dehalococcoides ethenogenes (strain 195)).